We begin with the raw amino-acid sequence, 324 residues long: Adenine deaminase (324 aa).

3 residues coordinate Zn(2+): H8, H10, and H186. The active-site Proton donor is the E189. D267 provides a ligand contact to Zn(2+). Residue D268 coordinates substrate.

The protein belongs to the metallo-dependent hydrolases superfamily. Adenosine and AMP deaminases family. Adenine deaminase type 2 subfamily. Zn(2+) is required as a cofactor.

The enzyme catalyses adenine + H2O + H(+) = hypoxanthine + NH4(+). Functionally, catalyzes the hydrolytic deamination of adenine to hypoxanthine. Plays an important role in the purine salvage pathway and in nitrogen catabolism. The protein is Adenine deaminase of Mesorhizobium japonicum (strain LMG 29417 / CECT 9101 / MAFF 303099) (Mesorhizobium loti (strain MAFF 303099)).